A 243-amino-acid polypeptide reads, in one-letter code: Lipid II isoglutaminyl synthase (glutamine-hydrolyzing) subunit GatD (243 aa).

A GATase cobBQ-type domain is found at 6-197 (IYHFMSDKLN…LHGPILPKNY (192 aa)). Cys94 acts as the Nucleophile in catalysis. Arg128 is a substrate binding site. Residue His189 is part of the active site.

Belongs to the CobB/CobQ family. GatD subfamily. In terms of assembly, forms a heterodimer with MurT.

It carries out the reaction beta-D-GlcNAc-(1-&gt;4)-Mur2Ac(oyl-L-Ala-gamma-D-Glu-L-Lys-D-Ala-D-Ala)-di-trans,octa-cis-undecaprenyl diphosphate + L-glutamine + ATP + H2O = beta-D-GlcNAc-(1-&gt;4)-Mur2Ac(oyl-L-Ala-D-isoglutaminyl-L-Lys-D-Ala-D-Ala)-di-trans,octa-cis-undecaprenyl diphosphate + L-glutamate + ADP + phosphate + H(+). It catalyses the reaction L-glutamine + H2O = L-glutamate + NH4(+). It participates in cell wall biogenesis; peptidoglycan biosynthesis. In terms of biological role, the lipid II isoglutaminyl synthase complex catalyzes the formation of alpha-D-isoglutamine in the cell wall lipid II stem peptide. The GatD subunit catalyzes the hydrolysis of glutamine to glutamate and ammonia. The resulting ammonia molecule is channeled to the active site of MurT. This Staphylococcus aureus (strain N315) protein is Lipid II isoglutaminyl synthase (glutamine-hydrolyzing) subunit GatD.